Consider the following 128-residue polypeptide: UPF0102 protein KPN78578_35270 (128 aa).

Residues 1–20 (MAQVPAGKNRSGQLSKQTGD) form a disordered region.

The protein belongs to the UPF0102 family.

This Klebsiella pneumoniae subsp. pneumoniae (strain ATCC 700721 / MGH 78578) protein is UPF0102 protein KPN78578_35270.